A 694-amino-acid chain; its full sequence is Elongation factor G (694 aa).

Positions 8 to 287 (EDYRNFGIMA…AVVEFLPAPT (280 aa)) constitute a tr-type G domain. Residues 17–24 (AHIDAGKT), 86–90 (DTPGH), and 140–143 (NKMD) contribute to the GTP site.

It belongs to the TRAFAC class translation factor GTPase superfamily. Classic translation factor GTPase family. EF-G/EF-2 subfamily.

It localises to the cytoplasm. Its function is as follows. Catalyzes the GTP-dependent ribosomal translocation step during translation elongation. During this step, the ribosome changes from the pre-translocational (PRE) to the post-translocational (POST) state as the newly formed A-site-bound peptidyl-tRNA and P-site-bound deacylated tRNA move to the P and E sites, respectively. Catalyzes the coordinated movement of the two tRNA molecules, the mRNA and conformational changes in the ribosome. The polypeptide is Elongation factor G (Brucella anthropi (strain ATCC 49188 / DSM 6882 / CCUG 24695 / JCM 21032 / LMG 3331 / NBRC 15819 / NCTC 12168 / Alc 37) (Ochrobactrum anthropi)).